The primary structure comprises 311 residues: Methionyl-tRNA formyltransferase (311 aa).

The disordered stretch occupies residues 33 to 52; sequence RPDRPAGRGRHQRSSPVREL. Position 110–113 (110–113) interacts with (6S)-5,6,7,8-tetrahydrofolate; the sequence is SLLP.

Belongs to the Fmt family.

The catalysed reaction is L-methionyl-tRNA(fMet) + (6R)-10-formyltetrahydrofolate = N-formyl-L-methionyl-tRNA(fMet) + (6S)-5,6,7,8-tetrahydrofolate + H(+). Attaches a formyl group to the free amino group of methionyl-tRNA(fMet). The formyl group appears to play a dual role in the initiator identity of N-formylmethionyl-tRNA by promoting its recognition by IF2 and preventing the misappropriation of this tRNA by the elongation apparatus. The protein is Methionyl-tRNA formyltransferase of Parafrankia sp. (strain EAN1pec).